The chain runs to 195 residues: Imidazoleglycerol-phosphate dehydratase (195 aa).

The protein belongs to the imidazoleglycerol-phosphate dehydratase family.

It localises to the cytoplasm. The enzyme catalyses D-erythro-1-(imidazol-4-yl)glycerol 3-phosphate = 3-(imidazol-4-yl)-2-oxopropyl phosphate + H2O. Its pathway is amino-acid biosynthesis; L-histidine biosynthesis; L-histidine from 5-phospho-alpha-D-ribose 1-diphosphate: step 6/9. The sequence is that of Imidazoleglycerol-phosphate dehydratase from Desulfosudis oleivorans (strain DSM 6200 / JCM 39069 / Hxd3) (Desulfococcus oleovorans).